Here is a 362-residue protein sequence, read N- to C-terminus: MTELLKTPIHPLYAKYGAKTIDFGGWDLPVQFAGIKAEHEAVRTDAGLFDVSHMGEILVEGPDSTSYLQYLLTNDIEKIKIGKAQYNIMCYETGGTVDDLVVYKKSETEYILVVNAANTAKDFEWMVKNIQGDVSVTNVSSEYGQLALQGPNAEKILAKLTDVDLSSISFFGFVEDADVAGVKTIISRSGYTGEDGFEIYMPSADAGKVFEAILAEGVAPIGLGARDTLRLEAVLALYGQELSKDITPLEAGLNFAVKLKKEADFIGKEALIKQKEAGLNRKLVGIELIERGIPRHDYPVFLNDEEIGIVTSGTQSPTLGTNIGLALIDTAYTELGQEVEVGIRNKKIKAKIVPTPFYKRAK.

It belongs to the GcvT family. As to quaternary structure, the glycine cleavage system is composed of four proteins: P, T, L and H.

It catalyses the reaction N(6)-[(R)-S(8)-aminomethyldihydrolipoyl]-L-lysyl-[protein] + (6S)-5,6,7,8-tetrahydrofolate = N(6)-[(R)-dihydrolipoyl]-L-lysyl-[protein] + (6R)-5,10-methylene-5,6,7,8-tetrahydrofolate + NH4(+). In terms of biological role, the glycine cleavage system catalyzes the degradation of glycine. The polypeptide is Aminomethyltransferase (Listeria monocytogenes serotype 4a (strain HCC23)).